Consider the following 158-residue polypeptide: NAD(P)H-quinone oxidoreductase subunit J, chloroplastic (158 aa).

This sequence belongs to the complex I 30 kDa subunit family. NDH is composed of at least 16 different subunits, 5 of which are encoded in the nucleus.

The protein localises to the plastid. It is found in the chloroplast thylakoid membrane. The enzyme catalyses a plastoquinone + NADH + (n+1) H(+)(in) = a plastoquinol + NAD(+) + n H(+)(out). It carries out the reaction a plastoquinone + NADPH + (n+1) H(+)(in) = a plastoquinol + NADP(+) + n H(+)(out). Functionally, NDH shuttles electrons from NAD(P)H:plastoquinone, via FMN and iron-sulfur (Fe-S) centers, to quinones in the photosynthetic chain and possibly in a chloroplast respiratory chain. The immediate electron acceptor for the enzyme in this species is believed to be plastoquinone. Couples the redox reaction to proton translocation, and thus conserves the redox energy in a proton gradient. This Guizotia abyssinica (Niger) protein is NAD(P)H-quinone oxidoreductase subunit J, chloroplastic.